A 447-amino-acid chain; its full sequence is ATP-dependent protease ATPase subunit HslU (447 aa).

ATP-binding positions include Ile-17, 59 to 64, Asp-256, Glu-321, and Arg-393; that span reads GVGKTE.

This sequence belongs to the ClpX chaperone family. HslU subfamily. A double ring-shaped homohexamer of HslV is capped on each side by a ring-shaped HslU homohexamer. The assembly of the HslU/HslV complex is dependent on binding of ATP.

The protein localises to the cytoplasm. Its function is as follows. ATPase subunit of a proteasome-like degradation complex; this subunit has chaperone activity. The binding of ATP and its subsequent hydrolysis by HslU are essential for unfolding of protein substrates subsequently hydrolyzed by HslV. HslU recognizes the N-terminal part of its protein substrates and unfolds these before they are guided to HslV for hydrolysis. The chain is ATP-dependent protease ATPase subunit HslU from Pseudomonas putida (strain GB-1).